A 1639-amino-acid polypeptide reads, in one-letter code: RIMS-binding protein 3A (1639 aa).

Disordered regions lie at residues 1-22, 215-240, and 295-364; these read MAKD…SSPA, GSPD…CHAP, and SLDS…LTPS. Residues 21–143 adopt a coiled-coil conformation; that stretch reads PAAAVLENQR…ELQRQLAEEL (123 aa). Over residues 326–339 the composition is skewed to pro residues; that stretch reads SPPPSPLPPPPPPS. Coiled coils occupy residues 409-442 and 480-619; these read QADE…QETN and LAKD…AEEN. The disordered stretch occupies residues 697–811; the sequence is CRPGHPPEQP…DRDTASEVDD (115 aa). Polar residues-rich tracts occupy residues 707 to 718 and 761 to 775; these read WETSQMPESQVK and SVPQ…SQPL. Residues 776-790 show a composition bias toward low complexity; sequence SKKTSSQSNSSSEGS. The region spanning 832–899 is the SH3 1 domain; that stretch reads PKLKIFMAQY…PSNFVEQIPD (68 aa). Fibronectin type-III domains are found at residues 995–1083 and 1088–1184; these read APMQ…TLLA and PPLD…IPED. Disordered regions lie at residues 1251-1273 and 1292-1330; these read PRRQ…GAGS and QKSP…FIHL. Over residues 1293-1305 the composition is skewed to polar residues; sequence KSPQNHRPPSVSD. 2 SH3 domains span residues 1452-1520 and 1569-1636; these read TPAR…EMEV and WTPK…HMSL.

It belongs to the RIMBP family. Interacts with LRGUK (via guanylate kinase-like domain). Interacts (via C-terminus) with HOOK1 (via coiled-coil region).

Its subcellular location is the cytoplasm. It is found in the cytoskeleton. Functionally, probable component of the manchette, a microtubule-based structure which plays a key role in sperm head morphogenesis during late stages of sperm development. The sequence is that of RIMS-binding protein 3A (RIMBP3) from Homo sapiens (Human).